A 64-amino-acid chain; its full sequence is Large ribosomal subunit protein bL28C (64 aa).

This sequence belongs to the bacterial ribosomal protein bL28 family.

The protein is Large ribosomal subunit protein bL28C of Mycobacterium tuberculosis (strain ATCC 25618 / H37Rv).